Here is a 254-residue protein sequence, read N- to C-terminus: Coenzyme F420:L-glutamate ligase (254 aa).

Residues 11–14 (IPLI), 40–41 (ST), and lysine 45 contribute to the GTP site. Aspartate 109 provides a ligand contact to a divalent metal cation. Residue asparagine 112 participates in GTP binding. A divalent metal cation-binding residues include aspartate 150, threonine 151, and glutamate 208. 206–213 (MGEGAGGI) is a binding site for GTP.

It belongs to the CofE family. In terms of assembly, homodimer. Mg(2+) serves as cofactor. The cofactor is Mn(2+). It depends on K(+) as a cofactor.

The catalysed reaction is oxidized coenzyme F420-0 + GTP + L-glutamate = oxidized coenzyme F420-1 + GDP + phosphate + H(+). The enzyme catalyses oxidized coenzyme F420-1 + GTP + L-glutamate = oxidized coenzyme F420-2 + GDP + phosphate + H(+). Its pathway is cofactor biosynthesis; coenzyme F420 biosynthesis. In terms of biological role, catalyzes the GTP-dependent successive addition of two or more gamma-linked L-glutamates to the L-lactyl phosphodiester of 7,8-didemethyl-8-hydroxy-5-deazariboflavin (F420-0) to form coenzyme F420-0-glutamyl-glutamate (F420-2) or polyglutamated F420 derivatives. In Methanosarcina acetivorans (strain ATCC 35395 / DSM 2834 / JCM 12185 / C2A), this protein is Coenzyme F420:L-glutamate ligase.